We begin with the raw amino-acid sequence, 186 residues long: Ribosome-recycling factor (186 aa).

The protein belongs to the RRF family.

It is found in the cytoplasm. Responsible for the release of ribosomes from messenger RNA at the termination of protein biosynthesis. May increase the efficiency of translation by recycling ribosomes from one round of translation to another. The protein is Ribosome-recycling factor of Polaromonas sp. (strain JS666 / ATCC BAA-500).